We begin with the raw amino-acid sequence, 743 residues long: ABC-type transporter claG (743 aa).

Asn-4 and Asn-30 each carry an N-linked (GlcNAc...) asparagine glycan. The chain crosses the membrane as a helical span at residues 124 to 144; that stretch reads SILLDIFLVIVVSWPFPFAWI. Asn-159 is a glycosylation site (N-linked (GlcNAc...) asparagine). An ABC transporter domain is found at 200-439; the sequence is VEFSGISMRP…FQDAGYTFPL (240 aa). Residue 234-241 coordinates ATP; that stretch reads GPSGSGKS. Helical transmembrane passes span 507–527, 560–580, 611–631, 636–656, and 661–681; these read YPSF…IGLS, GMLL…KTFG, IFLS…PIVS, LIVN…ISAI, and NGPL…GCAP.

This sequence belongs to the ABC transporter superfamily. ABCG family.

Its subcellular location is the membrane. Its function is as follows. ABC-type transporter; part of the cla gene cluster that produces clavatol and ortho-quinone methide. The clavatol biosynthesis cluster cla and the terrestric acid cluster tra are both involved in the production of peniphenones and penilactones. The chain is ABC-type transporter claG from Penicillium crustosum (Blue mold fungus).